The following is a 253-amino-acid chain: uncharacterized protein (253 aa).

S-adenosyl-L-methionine is bound by residues Gly-45, 66-67, 94-95, and Arg-110; these read DA and AE.

Belongs to the methyltransferase superfamily.

This is an uncharacterized protein from Bacillus subtilis (strain 168).